A 421-amino-acid polypeptide reads, in one-letter code: Type II methyltransferase M.SfiI (421 aa).

This sequence belongs to the N(4)/N(6)-methyltransferase family. N(4) subfamily.

It catalyses the reaction a 2'-deoxycytidine in DNA + S-adenosyl-L-methionine = an N(4)-methyl-2'-deoxycytidine in DNA + S-adenosyl-L-homocysteine + H(+). Functionally, a beta subtype methylase, recognizes the double-stranded sequence 5'-GGCCNNNNNGGCC-3', methylates C-? on both strands, and protects the DNA from cleavage by the SfiI endonuclease. The protein is Type II methyltransferase M.SfiI of Streptomyces fimbriatus.